Here is a 330-residue protein sequence, read N- to C-terminus: uncharacterized protein (330 aa).

2 disordered regions span residues 136–160 (VPPSVNEPKPKTSQTTKPPSNDESS) and 172–314 (DNEK…SQFN). Pro residues predominate over residues 223–235 (PKPPAPPPPPPVP). Residues 236–246 (ISMTPAAISVT) show a composition bias toward low complexity. Composition is skewed to polar residues over residues 263-276 (AQSTLPSVSSTTDE), 284-294 (TRSSSQSNSTV), and 304-314 (PASSPTFSQFN).

This is an uncharacterized protein from Danio rerio (Zebrafish).